Consider the following 426-residue polypeptide: Synaptotagmin-13 (426 aa).

Over 1–6 the chain is Vesicular; sequence MVLSVP. The helical transmembrane segment at 7 to 29 threads the bilayer; the sequence is VIALGATLGTATSILALCGVTCL. The Cytoplasmic portion of the chain corresponds to 30–426; it reads CRHMHPKKGL…QIAMWHQLHL (397 aa). C2 domains follow at residues 158-275 and 287-422; these read QAPK…AQWG and GAGE…AMWH.

It belongs to the synaptotagmin family. As to quaternary structure, interacts with NRXN1. In terms of tissue distribution, expressed in brain, heart, spleen, lung and testis.

The protein resides in the cytoplasmic vesicle membrane. In terms of biological role, may be involved in transport vesicle docking to the plasma membrane. This is Synaptotagmin-13 (Syt13) from Mus musculus (Mouse).